A 662-amino-acid chain; its full sequence is UvrABC system protein B (662 aa).

The region spanning Asp-31–Arg-188 is the Helicase ATP-binding domain. Gly-44 to Thr-51 lines the ATP pocket. Positions Tyr-97–Val-120 match the Beta-hairpin motif. The Helicase C-terminal domain occupies Gln-435 to Ile-601. Positions Lys-626–Leu-661 constitute a UVR domain.

It belongs to the UvrB family. Forms a heterotetramer with UvrA during the search for lesions. Interacts with UvrC in an incision complex.

It localises to the cytoplasm. In terms of biological role, the UvrABC repair system catalyzes the recognition and processing of DNA lesions. A damage recognition complex composed of 2 UvrA and 2 UvrB subunits scans DNA for abnormalities. Upon binding of the UvrA(2)B(2) complex to a putative damaged site, the DNA wraps around one UvrB monomer. DNA wrap is dependent on ATP binding by UvrB and probably causes local melting of the DNA helix, facilitating insertion of UvrB beta-hairpin between the DNA strands. Then UvrB probes one DNA strand for the presence of a lesion. If a lesion is found the UvrA subunits dissociate and the UvrB-DNA preincision complex is formed. This complex is subsequently bound by UvrC and the second UvrB is released. If no lesion is found, the DNA wraps around the other UvrB subunit that will check the other stand for damage. The polypeptide is UvrABC system protein B (Streptococcus pneumoniae (strain ATCC 700669 / Spain 23F-1)).